The following is a 75-amino-acid chain: Dermaseptin-SP3 (75 aa).

An N-terminal signal peptide occupies residues Met1–Cys22. Residues Glu23–Arg45 constitute a propeptide that is removed on maturation. Residue Pro72 is modified to Proline amide. The propeptide occupies Glu74–Gln75.

It belongs to the frog skin active peptide (FSAP) family. Dermaseptin subfamily. As to expression, expressed by the skin glands.

The protein resides in the secreted. It is found in the target cell membrane. Its function is as follows. Antimicrobial peptide with activity against Gram-positive and Gram-negative bacteria and fungi. Has been tested against E.coli (MIC=47.50-128 uM), S.aureus (MIC=189.98-512 uM), K.pneumoniae (MIC&gt;189.98 uM) and C.albicans (MIC&gt;189.98 uM). Probably acts by disturbing membrane functions with its alpha-helical amphipathic structure. May penetrate bacterial membranes, but stay at the mammalian membrane surface. Shows a very weak hemolytic activity. The polypeptide is Dermaseptin-SP3 (Agalychnis spurrelli (Gliding leaf frog)).